The primary structure comprises 192 residues: Ion-translocating oxidoreductase complex subunit A (192 aa).

The next 6 membrane-spanning stretches (helical) occupy residues 5-25 (LLLL…FLGL), 39-59 (IGMS…SFLV), 72-92 (LRTM…EMLV), 102-122 (ALGI…VALL), 134-154 (AIYG…FSAM), and 171-191 (AIAM…TGLV).

It belongs to the NqrDE/RnfAE family. The complex is composed of six subunits: RnfA, RnfB, RnfC, RnfD, RnfE and RnfG.

It is found in the cell inner membrane. In terms of biological role, part of a membrane-bound complex that couples electron transfer with translocation of ions across the membrane. This Shewanella amazonensis (strain ATCC BAA-1098 / SB2B) protein is Ion-translocating oxidoreductase complex subunit A.